Here is a 184-residue protein sequence, read N- to C-terminus: Ribulose bisphosphate carboxylase small subunit, chloroplastic 5 (184 aa).

Residues 1-43 (MAAAMMNKTIVVSKDGCARSSSIPKVATNKMGFASAVAMKKSR) constitute a chloroplast transit peptide.

Belongs to the RuBisCO small chain family. In terms of assembly, heterohexadecamer of 8 large and 8 small subunits.

Its subcellular location is the plastid. It is found in the chloroplast. RuBisCO catalyzes two reactions: the carboxylation of D-ribulose 1,5-bisphosphate, the primary event in carbon dioxide fixation, as well as the oxidative fragmentation of the pentose substrate. Both reactions occur simultaneously and in competition at the same active site. Although the small subunit is not catalytic it is essential for maximal activity. This chain is Ribulose bisphosphate carboxylase small subunit, chloroplastic 5, found in Acetabularia peniculus (Green alga).